Here is a 619-residue protein sequence, read N- to C-terminus: TOX high mobility group box family member 4 (619 aa).

Disordered stretches follow at residues 155 to 227, 304 to 335, and 436 to 458; these read LSLG…QKPV, ELDP…TESP, and LPPP…QQQV. T176 bears the Phosphothreonine mark. Phosphoserine is present on residues S178 and S182. Basic and acidic residues predominate over residues 183–193; sequence LHEDGVDDFRR. Over residues 208-218 the composition is skewed to basic residues; sequence KQKAPKKRKKK. Residues 213-218 carry the Nuclear localization signal motif; sequence KKRKKK. The HMG box DNA-binding region spans 223–291; that stretch reads PQKPVSAYAL…EYLKALAAYK (69 aa). T313 is subject to Phosphothreonine. S315 is subject to Phosphoserine. Low complexity predominate over residues 320–335; sequence TTADPASPAPASTESP. A compositionally biased stretch (pro residues) spans 436-453; that stretch reads LPPPRLQPPPLQQMPQPP. An Asymmetric dimethylarginine modification is found at R479. Phosphoserine is present on residues S531, S548, S550, S558, S560, and S565.

As to quaternary structure, component of the PNUTS-PP1 phosphatase complex, composed of PPP1R10/PNUTS, TOX4, WDR82 and PPP1CA or PPP1CB or PPP1CC. Interacts with PPP1R10/PNUTS. Interacts with FOXO1 and CREB1 (increased by cAMP); FOXO1 and CREB1 are required for full induction of TOX4-dependent activity and the interactions are inhibited by insulin.

It is found in the nucleus. It localises to the chromosome. In liver, recruited to target gene promoters following treatment with dexamethasone and cAMP. Binding is decreased in presence of insulin. Its function is as follows. Transcription factor that modulates cell fate reprogramming from the somatic state to the pluripotent and neuronal fate. In liver, controls the expression of hormone-regulated gluconeogenic genes such as G6PC1 and PCK1. This regulation is independent of the insulin receptor activation. Also acts as a regulatory component of protein phosphatase 1 (PP1) complexes. Component of the PNUTS-PP1 protein phosphatase complex, a PP1 complex that regulates RNA polymerase II transcription pause-release. PNUTS-PP1 also plays a role in the control of chromatin structure and cell cycle progression during the transition from mitosis into interphase. This chain is TOX high mobility group box family member 4 (Tox4), found in Rattus norvegicus (Rat).